The chain runs to 107 residues: UPF0145 protein YbjQ (107 aa).

Belongs to the UPF0145 family.

The sequence is that of UPF0145 protein YbjQ from Salmonella gallinarum (strain 287/91 / NCTC 13346).